Reading from the N-terminus, the 476-residue chain is Cysteine--tRNA ligase (476 aa).

Cys31 serves as a coordination point for Zn(2+). Residues 33–43 (PTVYNYAHIGN) carry the 'HIGH' region motif. Cys211, His236, and Glu240 together coordinate Zn(2+). A 'KMSKS' region motif is present at residues 269–273 (KMSKS). Lys272 contacts ATP.

The protein belongs to the class-I aminoacyl-tRNA synthetase family. In terms of assembly, monomer. Zn(2+) serves as cofactor.

It is found in the cytoplasm. It carries out the reaction tRNA(Cys) + L-cysteine + ATP = L-cysteinyl-tRNA(Cys) + AMP + diphosphate. The protein is Cysteine--tRNA ligase of Xanthomonas axonopodis pv. citri (strain 306).